The sequence spans 336 residues: Large ribosomal subunit protein uL3 (336 aa).

The interval 1 to 34 is disordered; that stretch reads MVRHHQPRKGSVAFSPRKRAAKETPRIKSWPQND.

Belongs to the universal ribosomal protein uL3 family. Part of the 50S ribosomal subunit. Forms a cluster with proteins L14 and L24e.

In terms of biological role, one of the primary rRNA binding proteins, it binds directly near the 3'-end of the 23S rRNA, where it nucleates assembly of the 50S subunit. This is Large ribosomal subunit protein uL3 from Methanobrevibacter smithii (strain ATCC 35061 / DSM 861 / OCM 144 / PS).